Reading from the N-terminus, the 192-residue chain is Thymidylate kinase (192 aa).

Position 7–14 (7–14 (GIDCVGKS)) interacts with ATP.

The protein belongs to the thymidylate kinase family.

It carries out the reaction dTMP + ATP = dTDP + ADP. Functionally, phosphorylation of dTMP to form dTDP in both de novo and salvage pathways of dTTP synthesis. This Campylobacter jejuni subsp. doylei (strain ATCC BAA-1458 / RM4099 / 269.97) protein is Thymidylate kinase.